We begin with the raw amino-acid sequence, 455 residues long: Tubulin alpha chain (455 aa).

The GTP site is built by Q11, E77, S145, G149, T150, S184, N211, and N233. A Mg(2+)-binding site is contributed by E77. Residue E259 is part of the active site.

It belongs to the tubulin family. In terms of assembly, dimer of alpha and beta chains. A typical microtubule is a hollow water-filled tube with an outer diameter of 25 nm and an inner diameter of 15 nM. Alpha-beta heterodimers associate head-to-tail to form protofilaments running lengthwise along the microtubule wall with the beta-tubulin subunit facing the microtubule plus end conferring a structural polarity. Microtubules usually have 13 protofilaments but different protofilament numbers can be found in some organisms and specialized cells. Mg(2+) serves as cofactor.

The protein resides in the cytoplasm. It localises to the cytoskeleton. The enzyme catalyses GTP + H2O = GDP + phosphate + H(+). Tubulin is the major constituent of microtubules, a cylinder consisting of laterally associated linear protofilaments composed of alpha- and beta-tubulin heterodimers. Microtubules grow by the addition of GTP-tubulin dimers to the microtubule end, where a stabilizing cap forms. Below the cap, tubulin dimers are in GDP-bound state, owing to GTPase activity of alpha-tubulin. This is Tubulin alpha chain from Entamoeba histolytica (strain ATCC 30459 / HM-1:IMSS / ABRM).